A 284-amino-acid polypeptide reads, in one-letter code: MEMO1 family protein YN1551_0739 (284 aa).

It belongs to the MEMO1 family.

In Saccharolobus islandicus (strain Y.N.15.51 / Yellowstone #2) (Sulfolobus islandicus), this protein is MEMO1 family protein YN1551_0739.